The following is a 129-amino-acid chain: Histone H2A.J (129 aa).

The tract at residues 1–22 (MSGRGKQGGKVRAKAKSRSSRA) is disordered. An N-acetylserine modification is found at S2. Position 2 is a phosphoserine (S2). K6 bears the N6-acetyllysine mark. Residues 7–19 (QGGKVRAKAKSRS) are compositionally biased toward basic residues. K10 bears the N6-lactoyllysine; alternate mark. Residues K14 and K16 each participate in a glycyl lysine isopeptide (Lys-Gly) (interchain with G-Cter in ubiquitin) cross-link. Residue Q105 is modified to N5-methylglutamine. A Glycyl lysine isopeptide (Lys-Gly) (interchain with G-Cter in ubiquitin) cross-link involves residue K120.

Belongs to the histone H2A family. In terms of assembly, the nucleosome is a histone octamer containing two molecules each of H2A, H2B, H3 and H4 assembled in one H3-H4 heterotetramer and two H2A-H2B heterodimers. The octamer wraps approximately 147 bp of DNA. Post-translationally, monoubiquitination of Lys-120 (H2AXK119ub) gives a specific tag for epigenetic transcriptional repression. Following DNA double-strand breaks (DSBs), it is ubiquitinated through 'Lys-63' linkage of ubiquitin moieties. In terms of processing, phosphorylation on Ser-2 is enhanced during mitosis. Phosphorylation on Ser-2 directly represses transcription.

The protein resides in the nucleus. It is found in the chromosome. Core component of nucleosome. Nucleosomes wrap and compact DNA into chromatin, limiting DNA accessibility to the cellular machineries which require DNA as a template. Histones thereby play a central role in transcription regulation, DNA repair, DNA replication and chromosomal stability. DNA accessibility is regulated via a complex set of post-translational modifications of histones, also called histone code, and nucleosome remodeling. In Gallus gallus (Chicken), this protein is Histone H2A.J (H2A-IX).